The chain runs to 199 residues: MTDLYAEALATFATLYAEAQNSAEIEASAMTVATANLDGRPSARTVLLKAFDARGFVFYTHLDSAKGRDLQTHPQAALLFLWRSLREAGIQVRIEGGVQLVSADESDAYFASRPRMSQIGAWASLQSQTLGSREEFEAAIAKVEATFDGRDVPRPDGWGGFRVVPQAFEFWYGAKFRLHERWRYEADAASHWSKRMLYP.

FMN is bound by residues 44–49, 59–60, Lys-66, and Gln-91; these read RTVLLK and YT. A substrate-binding site is contributed by Lys-49. Substrate contacts are provided by Tyr-109, Arg-113, and Ser-117. FMN-binding positions include 126 to 127 and Trp-171; that span reads QS. A substrate-binding site is contributed by 177-179; it reads RLH. Arg-181 contacts FMN.

The protein belongs to the pyridoxamine 5'-phosphate oxidase family. Homodimer. FMN serves as cofactor.

The enzyme catalyses pyridoxamine 5'-phosphate + O2 + H2O = pyridoxal 5'-phosphate + H2O2 + NH4(+). It catalyses the reaction pyridoxine 5'-phosphate + O2 = pyridoxal 5'-phosphate + H2O2. Its pathway is cofactor metabolism; pyridoxal 5'-phosphate salvage; pyridoxal 5'-phosphate from pyridoxamine 5'-phosphate: step 1/1. It functions in the pathway cofactor metabolism; pyridoxal 5'-phosphate salvage; pyridoxal 5'-phosphate from pyridoxine 5'-phosphate: step 1/1. In terms of biological role, catalyzes the oxidation of either pyridoxine 5'-phosphate (PNP) or pyridoxamine 5'-phosphate (PMP) into pyridoxal 5'-phosphate (PLP). The sequence is that of Pyridoxine/pyridoxamine 5'-phosphate oxidase from Xanthomonas campestris pv. campestris (strain 8004).